The sequence spans 520 residues: GMP synthase [glutamine-hydrolyzing] (520 aa).

The Glutamine amidotransferase type-1 domain maps to 12–205 (KIIVLDYGSQ…AISICGARGD (194 aa)). Cys89 serves as the catalytic Nucleophile. Catalysis depends on residues His179 and Glu181. The GMPS ATP-PPase domain occupies 206–395 (WSMDNFIDME…LGMPDEVVWR (190 aa)). Position 233–239 (233–239 (SGGVDSS)) interacts with ATP.

In terms of assembly, homodimer.

The enzyme catalyses XMP + L-glutamine + ATP + H2O = GMP + L-glutamate + AMP + diphosphate + 2 H(+). It functions in the pathway purine metabolism; GMP biosynthesis; GMP from XMP (L-Gln route): step 1/1. In terms of biological role, catalyzes the synthesis of GMP from XMP. The sequence is that of GMP synthase [glutamine-hydrolyzing] from Streptococcus equi subsp. zooepidemicus (strain H70).